Here is a 274-residue protein sequence, read N- to C-terminus: 2,3,4,5-tetrahydropyridine-2,6-dicarboxylate N-succinyltransferase (274 aa).

It belongs to the transferase hexapeptide repeat family.

It is found in the cytoplasm. It carries out the reaction (S)-2,3,4,5-tetrahydrodipicolinate + succinyl-CoA + H2O = (S)-2-succinylamino-6-oxoheptanedioate + CoA. Its pathway is amino-acid biosynthesis; L-lysine biosynthesis via DAP pathway; LL-2,6-diaminopimelate from (S)-tetrahydrodipicolinate (succinylase route): step 1/3. The polypeptide is 2,3,4,5-tetrahydropyridine-2,6-dicarboxylate N-succinyltransferase (Leptothrix cholodnii (strain ATCC 51168 / LMG 8142 / SP-6) (Leptothrix discophora (strain SP-6))).